A 741-amino-acid polypeptide reads, in one-letter code: Beta-galactosidase 10 (741 aa).

Positions 1-29 (MNRVTTESIASTAILVVMVFLFSWRSIEA) are cleaved as a signal peptide. N31 is a glycosylation site (N-linked (GlcNAc...) asparagine). E188 serves as the catalytic Proton donor. Residue E257 is the Nucleophile of the active site. 5 N-linked (GlcNAc...) asparagine glycosylation sites follow: N358, N396, N469, N525, and N583.

It belongs to the glycosyl hydrolase 35 family. In terms of tissue distribution, ubiquitous.

The protein resides in the secreted. It localises to the extracellular space. Its subcellular location is the apoplast. The enzyme catalyses Hydrolysis of terminal non-reducing beta-D-galactose residues in beta-D-galactosides.. The chain is Beta-galactosidase 10 (BGAL10) from Arabidopsis thaliana (Mouse-ear cress).